The sequence spans 226 residues: 2-C-methyl-D-erythritol 4-phosphate cytidylyltransferase (226 aa).

This sequence belongs to the IspD/TarI cytidylyltransferase family. IspD subfamily.

The enzyme catalyses 2-C-methyl-D-erythritol 4-phosphate + CTP + H(+) = 4-CDP-2-C-methyl-D-erythritol + diphosphate. It participates in isoprenoid biosynthesis; isopentenyl diphosphate biosynthesis via DXP pathway; isopentenyl diphosphate from 1-deoxy-D-xylulose 5-phosphate: step 2/6. In terms of biological role, catalyzes the formation of 4-diphosphocytidyl-2-C-methyl-D-erythritol from CTP and 2-C-methyl-D-erythritol 4-phosphate (MEP). The chain is 2-C-methyl-D-erythritol 4-phosphate cytidylyltransferase from Bacillus cereus (strain ATCC 14579 / DSM 31 / CCUG 7414 / JCM 2152 / NBRC 15305 / NCIMB 9373 / NCTC 2599 / NRRL B-3711).